Reading from the N-terminus, the 209-residue chain is High frequency lysogenization protein HflD homolog (209 aa).

This sequence belongs to the HflD family.

Its subcellular location is the cytoplasm. It localises to the cell inner membrane. This is High frequency lysogenization protein HflD homolog from Halorhodospira halophila (strain DSM 244 / SL1) (Ectothiorhodospira halophila (strain DSM 244 / SL1)).